Consider the following 309-residue polypeptide: NADH-cytochrome b5 reductase 1 (309 aa).

A helical membrane pass occupies residues 30–50 (FVPYAVALTAILAGLKLFTGG). Residues 60-165 (TEFQEFVLKE…RGPKGAMVYT (106 aa)) enclose the FAD-binding FR-type domain. FAD-binding positions include 145–160 (TTLK…GPKG) and 171–208 (HIGM…KLDL).

This sequence belongs to the flavoprotein pyridine nucleotide cytochrome reductase family. As to quaternary structure, monomer. Component of the 2-(3-amino-3-carboxypropyl)histidine synthase complex composed of dph1, dph2, dph3 and a NADH-dependent reductase, predominantly cbr1. The cofactor is FAD.

The protein resides in the mitochondrion outer membrane. It carries out the reaction 2 Fe(III)-[cytochrome b5] + NADH = 2 Fe(II)-[cytochrome b5] + NAD(+) + H(+). It catalyses the reaction 2 Fe(3+)-[Dph3] + NADH = 2 Fe(2+)-[Dph3] + NAD(+) + H(+). It participates in protein modification; peptidyl-diphthamide biosynthesis. Functionally, NADH-dependent reductase for dph3 and cytochrome b5. Required for the first step of diphthamide biosynthesis, a post-translational modification of histidine which occurs in elongation factor 2. Dph1 and dph2 transfer a 3-amino-3-carboxypropyl (ACP) group from S-adenosyl-L-methionine (SAM) to a histidine residue, the reaction is assisted by a reduction system comprising dph3 and a NADH-dependent reductase, predominantly cbr1. By reducing dph3, also involved in the formation of the tRNA wobble base modification mcm5s 2U (5-methoxycarbonylmethyl-2-thiouridine), mediated by the elongator complex. The cytochrome b5/NADH cytochrome b5 reductase electron transfer system supports the catalytic activity of several sterol biosynthetic enzymes. This is NADH-cytochrome b5 reductase 1 (cbr1) from Neosartorya fischeri (strain ATCC 1020 / DSM 3700 / CBS 544.65 / FGSC A1164 / JCM 1740 / NRRL 181 / WB 181) (Aspergillus fischerianus).